The primary structure comprises 479 residues: Muscarinic acetylcholine receptor M4 (479 aa).

The Extracellular portion of the chain corresponds to 1–31 (MANFTPVNGSSGNQSVRLVTSSSHNRYETVE). Residues N8 and N13 are each glycosylated (N-linked (GlcNAc...) asparagine). The chain crosses the membrane as a helical span at residues 32–54 (MVFIATVTGSLSLVTVVGNILVM). Over 55 to 68 (LSIKVNRQLQTVNN) the chain is Cytoplasmic. A helical transmembrane segment spans residues 69 to 89 (YFLFSLACADLIIGAFSMNLY). Over 90–106 (TVYIIKGYWPLGAVVCD) the chain is Extracellular. Residues C105 and C185 are joined by a disulfide bond. A helical membrane pass occupies residues 107–128 (LWLALDYVVSNASVMNLLIISF). Topologically, residues 129-148 (DRYFCVTKPLTYPARRTTKM) are cytoplasmic. The helical transmembrane segment at 149–171 (AGLMIAAAWVLSFVLWAPAILFW) threads the bilayer. Over 172–193 (QFVVGKRTVPDNQCFIQFLSNP) the chain is Extracellular. The chain crosses the membrane as a helical span at residues 194-216 (AVTFGTAIAAFYLPVVIMTVLYI). Over 217–401 (HISLASRSRV…AARERKVTRT (185 aa)) the chain is Cytoplasmic. Residues 271–333 (KLEEAPPPAL…PAPPLQPRAL (63 aa)) form a disordered region. Positions 275–286 (APPPALPPPPRP) are enriched in pro residues. Polar residues predominate over residues 294–304 (NESSSGSATQN). A helical transmembrane segment spans residues 402 to 422 (IFAILLAFILTWTPYNVMVLV). Topologically, residues 423–436 (NTFCQSCIPDTVWS) are extracellular. Residues 437-456 (IGYWLCYVNSTINPACYALC) form a helical membrane-spanning segment. The Cytoplasmic portion of the chain corresponds to 457-479 (NATFKKTFRHLLLCQYRNIGTAR). Phosphothreonine occurs at positions 459, 463, and 477.

It belongs to the G-protein coupled receptor 1 family. Muscarinic acetylcholine receptor subfamily. CHRM4 sub-subfamily.

It is found in the cell membrane. The protein resides in the postsynaptic cell membrane. The muscarinic acetylcholine receptor mediates various cellular responses, including inhibition of adenylate cyclase, breakdown of phosphoinositides and modulation of potassium channels through the action of G proteins. Primary transducing effect is inhibition of adenylate cyclase. This Homo sapiens (Human) protein is Muscarinic acetylcholine receptor M4 (CHRM4).